The primary structure comprises 268 residues: Tryptophan synthase alpha chain (268 aa).

Catalysis depends on proton acceptor residues Glu49 and Asp60.

This sequence belongs to the TrpA family. As to quaternary structure, tetramer of two alpha and two beta chains.

It carries out the reaction (1S,2R)-1-C-(indol-3-yl)glycerol 3-phosphate + L-serine = D-glyceraldehyde 3-phosphate + L-tryptophan + H2O. Its pathway is amino-acid biosynthesis; L-tryptophan biosynthesis; L-tryptophan from chorismate: step 5/5. The alpha subunit is responsible for the aldol cleavage of indoleglycerol phosphate to indole and glyceraldehyde 3-phosphate. The polypeptide is Tryptophan synthase alpha chain (Xylella fastidiosa (strain M23)).